The following is a 455-amino-acid chain: Probable ATP-dependent RNA helicase DDX47 (455 aa).

Residues 1–10 show a composition bias toward basic and acidic residues; the sequence is MAAPEEHDSP. Residues 1 to 20 are disordered; sequence MAAPEEHDSPTEASQPIVEE. Ala-2 carries the post-translational modification N-acetylalanine. Ser-9 is subject to Phosphoserine. Residues 24–52 carry the Q motif motif; sequence KTFKDLGVTDVLCEACDQLGWTKPTKIQI. The Helicase ATP-binding domain maps to 55-226; sequence IPLALQGRDI…RAALKNPVKC (172 aa). 68 to 75 provides a ligand contact to ATP; the sequence is AETGSGKT. Position 149 is a phosphothreonine (Thr-149). The short motif at 174–177 is the DEAD box element; that stretch reads DEAD. In terms of domain architecture, Helicase C-terminal spans 237–397; sequence KLQQYYIFIP…GFPTQDDEVM (161 aa). Residues 413–428 are compositionally biased toward basic and acidic residues; sequence ELREHGEKKKRSREDA. Positions 413-455 are disordered; the sequence is ELREHGEKKKRSREDAGDNDDTEGAIGVRNKVAGGKMKKRKGR. Position 424 is a phosphoserine (Ser-424).

The protein belongs to the DEAD box helicase family. DDX47/RRP3 subfamily. As to quaternary structure, interacts with AGO1 and AGO2. Interacts with GABARAP. Interacts with NOL8; the interaction is RNA-dependent. As to expression, expressed in skin, lung and breast. Also expressed in the brain.

It localises to the nucleus. It is found in the nucleolus. The enzyme catalyses ATP + H2O = ADP + phosphate + H(+). Functionally, required for efficient ribosome biogenesis. May have a role in mRNA splicing. Involved in apoptosis. This chain is Probable ATP-dependent RNA helicase DDX47 (DDX47), found in Homo sapiens (Human).